Reading from the N-terminus, the 460-residue chain is U-box domain-containing protein 9 (460 aa).

The U-box domain occupies 73-147; sequence SCPEEFRCPL…SKWCKKNGLE (75 aa). 3 ARM repeats span residues 201-244, 248-287, and 289-328; these read TEFR…NISI, SNKKLVCENPNVIPLLIDALRRGTVATRSNAAAAIFTLSA, and DSNKVLIGKSGILKPLIDLLEEGNPLAIKDVAAAIFTLCI.

Binds to SD11, SD16, SD17, SD18, SD113, SD129 and SD25. Phosphorylated by SD1-6 and SD1-7.

It is found in the nucleus. It localises to the cell membrane. The catalysed reaction is S-ubiquitinyl-[E2 ubiquitin-conjugating enzyme]-L-cysteine + [acceptor protein]-L-lysine = [E2 ubiquitin-conjugating enzyme]-L-cysteine + N(6)-ubiquitinyl-[acceptor protein]-L-lysine.. It functions in the pathway protein modification; protein ubiquitination. In terms of biological role, functions as an E3 ubiquitin ligase. May be involved in the abscisic acid-mediated signaling pathway, at least during germination. This chain is U-box domain-containing protein 9 (PUB9), found in Arabidopsis thaliana (Mouse-ear cress).